A 453-amino-acid chain; its full sequence is MDWKDVLRRRLASPNTDPKRKKSEQELKDEEMDLFTKYYSEWKGGRKNTNEFYKTIPRFYYRLPAEDEVLLQKLREESRAVFLQRKSRELLDNEELQNLWFLLDKHQIPPMIGEEAMINYENFLKVGEKAGPKCKQFFTAKVFAKLLHTDSYGRISIMQFFNYVMRKVWLHQTRIGLSLYDVAGQGYLRESDLENYILELIPTLPQLDGLEKSFYSFYVCTAVRKFFFFLDPLRTGKIKIQDILACSFLDDLLELRDEELSKESQETNWFSAPSALRVYGQYLNLDKDHNGMLSKEELSRYGTATMTNVFLDRVFQECLTYDGEMDYKTYLDFVLALENRKEPAALQYIFKLLDIENKGYLNVFSLNYFFRAIQELMKIHGQDPVSFQDVKDEIFDMVKPKDPLKISLQDLINSNQGDTVTTILIDLNGFWTYENREALVANDNENSADLDDT.

EF-hand domains lie at 273–308 and 341–376; these read PSALRVYGQYLNLDKDHNGMLSKEELSRYGTATMTN and KEPAALQYIFKLLDIENKGYLNVFSLNYFFRAIQEL. Ca(2+)-binding residues include aspartate 286, aspartate 288, asparagine 290, methionine 292, and glutamate 297.

As to quaternary structure, interacts with MCM3AP/GANP, PPP5C, and the phosphatase 2A core enzyme composed of the PPP2CA catalytic subunit and the constant regulatory subunit PPP2R1A. Finds in a complex with ABCB1, TFPI2 and PPP2R3C; leading to the dephosphorylation of ABCB1. As to expression, expressed in all tissues tested including heart, brain, spleen, thymus, lung, liver, kidney and testis.

The protein localises to the nucleus. Its subcellular location is the cytoplasm. Its function is as follows. May regulate MCM3AP phosphorylation through phosphatase recruitment. May act as a negative regulator of ABCB1 expression and function through the dephosphorylation of ABCB1 by TFPI2/PPP2R3C complex. May play a role in the activation-induced cell death of B-cells. In Mus musculus (Mouse), this protein is Serine/threonine-protein phosphatase 2A regulatory subunit B'' subunit gamma (Ppp2r3c).